Consider the following 378-residue polypeptide: Transmembrane 6 superfamily member 2 (378 aa).

A run of 10 helical transmembrane segments spans residues 10–30 (TVAM…VSAF), 34–54 (LFVV…VYSL), 63–83 (PLYA…VIAL), 110–130 (IFIC…MAGA), 140–160 (LGLY…PGNI), 170–190 (PTFF…VRIF), 219–239 (LALI…GLVV), 269–289 (MLMY…ALAF), 291–311 (GCSW…QAQF), and 332–352 (TWAT…LLAF). EXPERA domains lie at 61-186 (YDPL…CWAG) and 217-351 (ADLA…HLLA).

It belongs to the TM6SF family. As to expression, highly expressed in the liver at both the mRNA and protein levels.

The protein resides in the endoplasmic reticulum membrane. It localises to the endoplasmic reticulum-Golgi intermediate compartment membrane. In terms of biological role, regulator of liver fat metabolism influencing triglyceride secretion and hepatic lipid droplet content. May function as sterol isomerase. The sequence is that of Transmembrane 6 superfamily member 2 (Tm6sf2) from Mus musculus (Mouse).